The sequence spans 593 residues: Mitochondrial sodium/calcium exchanger protein (593 aa).

Residues 1-20 form the signal peptide; it reads MGPLWALRVAGALSVAGVLA. Over 21–93 the chain is Extracellular; the sequence is GHDGSQRAGQ…GAFCTFPSSL (73 aa). N-linked (GlcNAc...) asparagine glycosylation occurs at N58. The chain crosses the membrane as a helical span at residues 94–114; that stretch reads LPLSVSLYALWLLYLFVILGV. Residues 115–135 are Cytoplasmic-facing; that stretch reads TAEKFFCPNLSAISTNLKLSH. The chain crosses the membrane as a helical span at residues 136 to 158; that stretch reads NGLGVVGHSLTPALHGVTFLAFG. At 159 to 178 the chain is on the extracellular side; that stretch reads NGAPDIFSAVVAFSDPRTAG. The helical transmembrane segment at 179–199 threads the bilayer; that stretch reads LAVGAIFGAGIFVTTVVAGGI. The Cytoplasmic portion of the chain corresponds to 200–215; sequence ALVKPFAAASRPFLRD. The helical transmembrane segment at 216–236 threads the bilayer; the sequence is VIFYMVAVFLTFLVLYFGYIT. Residues 237 to 239 lie on the Extracellular side of the membrane; sequence LGE. A helical membrane pass occupies residues 240 to 260; that stretch reads ALGYLGLYVFYVFTVVLCTWI. Topologically, residues 261–334 are cytoplasmic; the sequence is HRWQRGDGPP…KWRRKPWYWR (74 aa). A compositionally biased stretch (pro residues) spans 268-277; that stretch reads GPPPPGPWEP. The interval 268-291 is disordered; the sequence is GPPPPGPWEPAIPTDAEEQESSGT. The helical transmembrane segment at 335–355 threads the bilayer; that stretch reads LFKVLKVPVELVLLLTVPVVD. At 356 to 369 the chain is on the extracellular side; it reads PDKDDLNWKRPLNC. Residues 370-390 form a helical membrane-spanning segment; sequence LHIVTGPLLCIFTLKSGAYGL. Over 391–395 the chain is Cytoplasmic; the sequence is YQIQG. Residues 396-416 traverse the membrane as a helical segment; it reads VFPVWALVALAGSVLAIIVFV. The Extracellular segment spans residues 417 to 428; it reads TTHNEEPPKYHC. Residues 429 to 449 form a helical membrane-spanning segment; that stretch reads VFAFLGFLSSAMWINAAATEL. The Cytoplasmic portion of the chain corresponds to 450-454; it reads VNILR. The chain crosses the membrane as a helical span at residues 455–475; the sequence is TLGIIFELSNTVLGLTLLAWG. The Extracellular segment spans residues 476 to 496; that stretch reads NSIGDTFSDLTMARQGYPRMA. A helical membrane pass occupies residues 497–517; that stretch reads FSACFGGIIFNILVGVGLGCL. The Cytoplasmic segment spans residues 518–533; it reads LQMTNSQMVVKLEPDS. Residues 534 to 554 traverse the membrane as a helical segment; that stretch reads LLVWILAGALGLSLVFSFVAV. Residues 555-564 are Extracellular-facing; it reads PAQCFQLGKA. The chain crosses the membrane as a helical span at residues 565–585; the sequence is YGTCLILYYLVFLCVALLTEF. Residues 586-593 lie on the Cytoplasmic side of the membrane; the sequence is RVIHLAAT.

This sequence belongs to the Ca(2+):cation antiporter (CaCA) (TC 2.A.19) family. SLC24A subfamily.

Its subcellular location is the mitochondrion inner membrane. It carries out the reaction Ca(2+)(in) + 3 Na(+)(out) = Ca(2+)(out) + 3 Na(+)(in). In terms of biological role, mitochondrial sodium/calcium antiporter that mediates sodium-dependent calcium efflux from mitochondrion, by mediating the exchange of 3 sodium ions per 1 calcium ion. Plays a central role in mitochondrial calcium homeostasis by mediating mitochondrial calcium extrusion: calcium efflux is essential for mitochondrial function and cell survival, notably in cardiomyocytes. Involved in B-lymphocyte chemotaxis. This chain is Mitochondrial sodium/calcium exchanger protein, found in Gallus gallus (Chicken).